We begin with the raw amino-acid sequence, 501 residues long: Carotenoid cleavage oxygenase (501 aa).

Fe cation is bound by residues His-162, His-211, His-314, and His-494.

It belongs to the carotenoid oxygenase family. The cofactor is Fe(2+).

Functionally, catalyzes the oxidative cleavage of several carotenoids and apocarotenoids in vitro. The polypeptide is Carotenoid cleavage oxygenase (Mycobacterium tuberculosis (strain CDC 1551 / Oshkosh)).